The sequence spans 273 residues: Glutamate 5-kinase (273 aa).

Residue lysine 15 coordinates ATP. Residues serine 55, aspartate 142, and asparagine 158 each contribute to the substrate site. ATP-binding positions include 178–179 and 220–226; these read SD and TGGMLSK.

Belongs to the glutamate 5-kinase family.

It localises to the cytoplasm. It catalyses the reaction L-glutamate + ATP = L-glutamyl 5-phosphate + ADP. It functions in the pathway amino-acid biosynthesis; L-proline biosynthesis; L-glutamate 5-semialdehyde from L-glutamate: step 1/2. Functionally, catalyzes the transfer of a phosphate group to glutamate to form L-glutamate 5-phosphate. The protein is Glutamate 5-kinase of Streptococcus pyogenes serotype M49 (strain NZ131).